A 303-amino-acid chain; its full sequence is MTNTTMQPNRLRIALQRKGRLSQDCAILLKQCGVKINWNEQRLIAYAENLPIEILRVRDDDIPGLIFDGVVDLGIIGENVLEEEELGRRAANETVTYKKLCQLDFGDCRLSLAVDRDCHYENVKDLANRRIATSYPHLLKRYMNENGVSFKSCLLNGSVEVAPSAGIAYAICDLVSSGATLEANGLKEVDVIYRSKACLIQRAEPLESTKQALVDKLLTRIQGVQQAAESKYIMLHAPKEKLEKITALLPGVENPTILPLATDTTRVAMHVVSQENLFWETMEQLKEAGASSILVLPIEKMME.

This sequence belongs to the ATP phosphoribosyltransferase family. Long subfamily. The cofactor is Mg(2+).

The protein localises to the cytoplasm. It catalyses the reaction 1-(5-phospho-beta-D-ribosyl)-ATP + diphosphate = 5-phospho-alpha-D-ribose 1-diphosphate + ATP. Its pathway is amino-acid biosynthesis; L-histidine biosynthesis; L-histidine from 5-phospho-alpha-D-ribose 1-diphosphate: step 1/9. With respect to regulation, feedback inhibited by histidine. Its function is as follows. Catalyzes the condensation of ATP and 5-phosphoribose 1-diphosphate to form N'-(5'-phosphoribosyl)-ATP (PR-ATP). Has a crucial role in the pathway because the rate of histidine biosynthesis seems to be controlled primarily by regulation of HisG enzymatic activity. This chain is ATP phosphoribosyltransferase, found in Haemophilus influenzae (strain PittGG).